The primary structure comprises 456 residues: Histidine--tRNA ligase (456 aa).

Belongs to the class-II aminoacyl-tRNA synthetase family. Homodimer.

The protein localises to the cytoplasm. It carries out the reaction tRNA(His) + L-histidine + ATP = L-histidyl-tRNA(His) + AMP + diphosphate + H(+). This chain is Histidine--tRNA ligase, found in Borreliella afzelii (strain PKo) (Borrelia afzelii).